The chain runs to 171 residues: Phosphopantetheine adenylyltransferase (171 aa).

Substrate is bound at residue threonine 9. ATP is bound by residues 9–10 and histidine 17; that span reads TF. The substrate site is built by lysine 41, leucine 73, and arginine 87. ATP-binding positions include 88–90, glutamate 98, and 123–129; these read GLR and YQFISGT.

Belongs to the bacterial CoaD family. As to quaternary structure, homohexamer. Mg(2+) serves as cofactor.

Its subcellular location is the cytoplasm. The enzyme catalyses (R)-4'-phosphopantetheine + ATP + H(+) = 3'-dephospho-CoA + diphosphate. The protein operates within cofactor biosynthesis; coenzyme A biosynthesis; CoA from (R)-pantothenate: step 4/5. In terms of biological role, reversibly transfers an adenylyl group from ATP to 4'-phosphopantetheine, yielding dephospho-CoA (dPCoA) and pyrophosphate. This chain is Phosphopantetheine adenylyltransferase, found in Paraburkholderia phytofirmans (strain DSM 17436 / LMG 22146 / PsJN) (Burkholderia phytofirmans).